The primary structure comprises 120 residues: Large ribosomal subunit protein bL19 (120 aa).

It belongs to the bacterial ribosomal protein bL19 family.

Its function is as follows. This protein is located at the 30S-50S ribosomal subunit interface and may play a role in the structure and function of the aminoacyl-tRNA binding site. The sequence is that of Large ribosomal subunit protein bL19 from Renibacterium salmoninarum (strain ATCC 33209 / DSM 20767 / JCM 11484 / NBRC 15589 / NCIMB 2235).